A 524-amino-acid polypeptide reads, in one-letter code: Nucleobase-ascorbate transporter 2 (524 aa).

Helical transmembrane passes span 41 to 61 (YILA…MMGG), 69 to 89 (VVQT…LFGT), 91 to 111 (LPTV…IIHD), 133 to 153 (GAII…MWAI), 155 to 175 (SRFF…FGLF), 179 to 199 (FPVV…FVIF), 217 to 237 (FALI…TASG), 282 to 302 (AFAM…AFKA), 359 to 379 (RVIQ…KFGA), 380 to 400 (LFAS…FGLV), 419 to 439 (LFIV…FRDF), and 457 to 477 (DFLN…AVFL).

This sequence belongs to the nucleobase:cation symporter-2 (NCS2) (TC 2.A.40) family. As to expression, expressed in cotyledons 10 days after imbibition (DAI). Expressed in the minor and major veins of cotyledons and leaves, in the shoot apex and pedicels. Expressed in the root meristems, root tips and lateral root primordia.

The protein resides in the membrane. The polypeptide is Nucleobase-ascorbate transporter 2 (NAT2) (Arabidopsis thaliana (Mouse-ear cress)).